The chain runs to 463 residues: Chromosomal replication initiator protein DnaA (463 aa).

The interval 1–83 (MSTNQIILTD…LQLFQHYNNT (83 aa)) is domain I, interacts with DnaA modulators. Residues 83 to 124 (TIKSIEIITKELPGTTQTVIELPTKTFADIGSSELNSENIFS) form a domain II region. Residues 125-343 (TLDVRFTFDN…GALNKVIAHS (219 aa)) form a domain III, AAA+ region region. 4 residues coordinate ATP: glycine 171, glycine 173, lysine 174, and threonine 175. The interval 344-463 (NFTLKEITLE…INLLMKILQN (120 aa)) is domain IV, binds dsDNA.

This sequence belongs to the DnaA family. Oligomerizes as a right-handed, spiral filament on DNA at oriC.

It localises to the cytoplasm. Functionally, plays an essential role in the initiation and regulation of chromosomal replication. ATP-DnaA binds to the origin of replication (oriC) to initiate formation of the DNA replication initiation complex once per cell cycle. Binds the DnaA box (a 9 base pair repeat at the origin) and separates the double-stranded (ds)DNA. Forms a right-handed helical filament on oriC DNA; dsDNA binds to the exterior of the filament while single-stranded (ss)DNA is stabiized in the filament's interior. The ATP-DnaA-oriC complex binds and stabilizes one strand of the AT-rich DNA unwinding element (DUE), permitting loading of DNA polymerase. After initiation quickly degrades to an ADP-DnaA complex that is not apt for DNA replication. Binds acidic phospholipids. The polypeptide is Chromosomal replication initiator protein DnaA (Rickettsia felis (strain ATCC VR-1525 / URRWXCal2) (Rickettsia azadi)).